A 193-amino-acid polypeptide reads, in one-letter code: Peptidyl-tRNA hydrolase (193 aa).

Tyr14 lines the tRNA pocket. The Proton acceptor role is filled by His19. The tRNA site is built by Phe64, Asn66, and Asn112.

Belongs to the PTH family. Monomer.

It localises to the cytoplasm. The catalysed reaction is an N-acyl-L-alpha-aminoacyl-tRNA + H2O = an N-acyl-L-amino acid + a tRNA + H(+). Functionally, hydrolyzes ribosome-free peptidyl-tRNAs (with 1 or more amino acids incorporated), which drop off the ribosome during protein synthesis, or as a result of ribosome stalling. Catalyzes the release of premature peptidyl moieties from peptidyl-tRNA molecules trapped in stalled 50S ribosomal subunits, and thus maintains levels of free tRNAs and 50S ribosomes. In Bartonella quintana (strain Toulouse) (Rochalimaea quintana), this protein is Peptidyl-tRNA hydrolase.